The chain runs to 620 residues: MFDFQHQLKILPDKPGVYIMKNSLGEVIYVGKAKVLKNRVRQYFQNSKNHSEKVRAMVKNIAEFEYIVTDSEMEALILECNLIKKYSPRYNIALKDDKFYPFIKITTNEDFPRVYVTRNFAKDGNRYFGPYTNGTAVYEVMGLIKKLFPLRTCKKAIVEGGEPTRACLNYHINLCKAPCAGYISKAEYWEMIDEIINILNGTDTSIIKKLKLEMEKAAEELEFEKAAKIRDRILAIELISEKQKMFTVKEGDEDFIDLYTDEKDGCAQVFFVREGKVTGREHFMIENIGDDPVKEVISSFIASFYGGTAQIPKTIYVPEEIEDQELIEKFLTEKRGSKVWIKVPKKGDKKNLLDMVRNNAKIMLDQFKEKMVEEKELNKSALTELADVLGLDSLPVRIEAYDISNIQGVDSVGTMVVFENGKAKNSDYRRFKIKSVKGPNDYESMREILSRRFSHGLEEVNKIKERNLEYSNGKFCIFPDLIMMDGGKGQVNIALEVLKGFGIEIPVCGLVKDHKHRTRGIILNNEEILIRRGSGLMNLITRVQDEVHRYAITYHRSLRDKRTLHSILEDIPRIGEKRRRNLLMKFGSIDNIKKASMEELLDTPGIDKRAAESIKQYFSS.

Residues 13–92 (DKPGVYIMKN…IKKYSPRYNI (80 aa)) enclose the GIY-YIG domain. In terms of domain architecture, UVR spans 204–239 (TSIIKKLKLEMEKAAEELEFEKAAKIRDRILAIELI).

This sequence belongs to the UvrC family. As to quaternary structure, interacts with UvrB in an incision complex.

It localises to the cytoplasm. Its function is as follows. The UvrABC repair system catalyzes the recognition and processing of DNA lesions. UvrC both incises the 5' and 3' sides of the lesion. The N-terminal half is responsible for the 3' incision and the C-terminal half is responsible for the 5' incision. The polypeptide is UvrABC system protein C (Clostridium perfringens (strain 13 / Type A)).